The primary structure comprises 240 residues: Eukaryotic translation initiation factor 4E-3 (240 aa).

A disordered region spans residues 1-51; the sequence is MVVTDSPVSGIMADQNIDPNTTTSPSPKEKHVSAIKAISGDEKAPSKEKKN. A compositionally biased stretch (polar residues) spans 17–26; sequence IDPNTTTSPS. Residues 39-51 show a composition bias toward basic and acidic residues; the sequence is SGDEKAPSKEKKN. EIF4G-binding regions lie at residues 65-68 and 75-111; these read HCFQ and FDNP…NNIH. Residues 83 to 88, K115, and 133 to 134 each bind mRNA; these read NQVIWG and WE. A disulfide bridge links C138 with C176. The interval 159 to 168 is EIF4G-binding; that stretch reads NTLLALVGEQ. MRNA is bound by residues 183-188 and 228-232; these read RARGDR and KTLDR.

Belongs to the eukaryotic initiation factor 4E family. As to quaternary structure, EIF4F is a multi-subunit complex, the composition of which varies with external and internal environmental conditions. It is composed of at least EIF4A, EIF4E and EIF4G. EIF4E is also known to interact with other partners. In higher plants two isoforms of EIF4F have been identified, named isoform EIF4F and isoform EIF(iso)4F. Isoform EIF4F has subunits p220 and p26, whereas isoform EIF(iso)4F has subunits p82 and p28. According to the redox status, the Cys-138-Cys-176 disulfide bridge may have a role in regulating protein function by affecting its ability to bind capped mRNA.

The protein localises to the nucleus. It is found in the cytoplasm. Component of the protein complex eIF4F, which is involved in the recognition of the mRNA cap, ATP-dependent unwinding of 5'-terminal secondary structure and recruitment of mRNA to the ribosome. Recognizes and binds the 7-methylguanosine-containing mRNA cap during an early step in the initiation of protein synthesis and facilitates ribosome binding by inducing the unwinding of the mRNAs secondary structures. This is Eukaryotic translation initiation factor 4E-3 from Arabidopsis thaliana (Mouse-ear cress).